Here is a 296-residue protein sequence, read N- to C-terminus: tRNA uridine(34) hydroxylase (296 aa).

Residues 130-225 form the Rhodanese domain; that stretch reads RGDDVVFFDG…YGEAYGNDGY (96 aa). Cysteine 185 serves as the catalytic Cysteine persulfide intermediate.

This sequence belongs to the TrhO family.

The catalysed reaction is uridine(34) in tRNA + AH2 + O2 = 5-hydroxyuridine(34) in tRNA + A + H2O. In terms of biological role, catalyzes oxygen-dependent 5-hydroxyuridine (ho5U) modification at position 34 in tRNAs. This chain is tRNA uridine(34) hydroxylase, found in Corynebacterium kroppenstedtii (strain DSM 44385 / JCM 11950 / CIP 105744 / CCUG 35717).